The sequence spans 453 residues: Succinate-semialdehyde dehydrogenase (acetylating) (453 aa).

188 to 193 (ATGGAG) is a binding site for NADP(+). Cysteine 242 is an active-site residue.

Homodimer.

The enzyme catalyses succinate semialdehyde + NADP(+) + CoA = succinyl-CoA + NADPH + H(+). Catalyzes the reduction of succinate semialdehyde to succinyl-CoA. The enzyme is specific for succinate semialdehyde and succinyl-CoA, and only shows low activity with palmitoyl-CoA. There is no activity with NAD(+) as cosubstrate. This Clostridium kluyveri (strain ATCC 8527 / DSM 555 / NBRC 12016 / NCIMB 10680 / K1) protein is Succinate-semialdehyde dehydrogenase (acetylating) (sucD).